A 165-amino-acid polypeptide reads, in one-letter code: Large ribosomal subunit protein uL10 (165 aa).

It belongs to the universal ribosomal protein uL10 family. Part of the ribosomal stalk of the 50S ribosomal subunit. The N-terminus interacts with L11 and the large rRNA to form the base of the stalk. The C-terminus forms an elongated spine to which L12 dimers bind in a sequential fashion forming a multimeric L10(L12)X complex.

In terms of biological role, forms part of the ribosomal stalk, playing a central role in the interaction of the ribosome with GTP-bound translation factors. The chain is Large ribosomal subunit protein uL10 from Edwardsiella ictaluri (strain 93-146).